We begin with the raw amino-acid sequence, 194 residues long: Mersacidin decarboxylase (194 aa).

Residue His-75 is part of the active site.

The protein belongs to the HFCD (homooligomeric flavin containing Cys decarboxylase) superfamily. As to quaternary structure, homododecamer. The cofactor is FAD.

It functions in the pathway antibiotic biosynthesis; mersacidin biosynthesis. Functionally, catalyzes the oxidative decarboxylation of the C-terminal cysteine residue of mersacidin to an aminoenethiol residue. The sequence is that of Mersacidin decarboxylase (mrsD) from Bacillus sp. (strain HIL-Y85/54728).